Reading from the N-terminus, the 462-residue chain is Tubulin alpha-4 chain (462 aa).

8 residues coordinate GTP: Gln-11, Glu-82, Ser-151, Gly-155, Thr-156, Thr-190, Asn-217, and Asn-239. Position 82 (Glu-82) interacts with Mg(2+). Glu-265 is a catalytic residue.

The protein belongs to the tubulin family. As to quaternary structure, dimer of alpha and beta chains. A typical microtubule is a hollow water-filled tube with an outer diameter of 25 nm and an inner diameter of 15 nM. Alpha-beta heterodimers associate head-to-tail to form protofilaments running lengthwise along the microtubule wall with the beta-tubulin subunit facing the microtubule plus end conferring a structural polarity. Microtubules usually have 13 protofilaments but different protofilament numbers can be found in some organisms and specialized cells. It depends on Mg(2+) as a cofactor.

The protein localises to the cytoplasm. Its subcellular location is the cytoskeleton. It catalyses the reaction GTP + H2O = GDP + phosphate + H(+). Functionally, tubulin is the major constituent of microtubules, a cylinder consisting of laterally associated linear protofilaments composed of alpha- and beta-tubulin heterodimers. Microtubules grow by the addition of GTP-tubulin dimers to the microtubule end, where a stabilizing cap forms. Below the cap, tubulin dimers are in GDP-bound state, owing to GTPase activity of alpha-tubulin. The protein is Tubulin alpha-4 chain (alphaTub67C) of Drosophila melanogaster (Fruit fly).